We begin with the raw amino-acid sequence, 566 residues long: Bicarbonate transporter BicA (566 aa).

Over 1–15 the chain is Cytoplasmic; that stretch reads MQITNKIHFRNIRGD. A helical membrane pass occupies residues 16–36; that stretch reads IFGGLTAAVIALPMALAFGVA. Residues 37 to 42 are Periplasmic-facing; it reads SGAGAE. Residues 43–63 traverse the membrane as a helical segment; that stretch reads AGLWGAVLVGFFAALFGGTPT. A topological domain (cytoplasmic) is located at residue leucine 64. A helical membrane pass occupies residues 65-85; the sequence is ISEPTGPMTVVMTAVIAHFTA. Threonine 69 is a hydrogencarbonate binding site. The Periplasmic segment spans residues 86–93; sequence SAATPEEG. The chain crosses the membrane as a helical span at residues 94–114; sequence LAIAFTVVMMAGVFQIIFGSL. At 115–126 the chain is on the cytoplasmic side; sequence KLGKYVTMMPYT. Residues 127–147 form a helical membrane-spanning segment; sequence VISGFMSGIGIILVILQLAPF. The Periplasmic segment spans residues 148–169; it reads LGQASPGGGVIGTLQNLPTLLS. A helical transmembrane segment spans residues 170–190; the sequence is NIQPGETALALGTVAIIWFMP. Topologically, residues 191–196 are cytoplasmic; sequence EKFKKV. The helical transmembrane segment at 197-217 threads the bilayer; the sequence is IPPQLVALVLGTVIAFFVFPP. Residues 218–247 lie on the Periplasmic side of the membrane; sequence EVSDLRRIGEIRAGFPELVRPSFSPVEFQR. A helical membrane pass occupies residues 248-268; the sequence is MILDAAVLGMLGCIDALLTSV. Residues aspartate 262, threonine 266, and glycine 304 each contribute to the Na(+) site. Over 269-318 the chain is Cytoplasmic; sequence VADSLTRTEHNSNKELIGQGLGNLFSGLFGGIAGAGATMGTVVNIQSGGR. Position 305 (alanine 305) interacts with hydrogencarbonate. Residue threonine 306 participates in Na(+) binding. A helical membrane pass occupies residues 319–339; sequence TALSGLVRAFVLLVVILGAAS. Leucine 340 is a topological domain (periplasmic). A helical transmembrane segment spans residues 341-361; sequence TATIPLAVLAGIAFKVGVDII. Residues 362–371 lie on the Cytoplasmic side of the membrane; sequence DWSFLKRAHE. The chain crosses the membrane as a helical span at residues 372-392; that stretch reads ISPKGALIMYGVILLTVLVDL. Residue isoleucine 393 is a topological domain, periplasmic. Residues 394–414 form a helical membrane-spanning segment; the sequence is VAVGVGVFVANVLTIERMSNL. The Cytoplasmic portion of the chain corresponds to 415 to 566; that stretch reads QSEKVQTVSD…GVTAPSSEMG (152 aa). The region spanning 436–546 is the STAS domain; the sequence is KRWLDEGQGR…MSREEALKNA (111 aa).

This sequence belongs to the SLC26A/SulP transporter (TC 2.A.53) family.

The protein localises to the cell inner membrane. Low/medium affinity, Na(+)-dependent bicarbonate transporter. This Picosynechococcus sp. (strain ATCC 27264 / PCC 7002 / PR-6) (Agmenellum quadruplicatum) protein is Bicarbonate transporter BicA (bicA).